The chain runs to 260 residues: Type III pantothenate kinase (260 aa).

6–13 (DCGNTNTV) lines the ATP pocket. 107-110 (GPDR) is a binding site for substrate. Catalysis depends on D109, which acts as the Proton acceptor. K(+) is bound at residue D129. Position 132 (T132) interacts with ATP. Residue T184 participates in substrate binding.

Belongs to the type III pantothenate kinase family. As to quaternary structure, homodimer. The cofactor is NH4(+). K(+) is required as a cofactor.

It is found in the cytoplasm. The catalysed reaction is (R)-pantothenate + ATP = (R)-4'-phosphopantothenate + ADP + H(+). It participates in cofactor biosynthesis; coenzyme A biosynthesis; CoA from (R)-pantothenate: step 1/5. Catalyzes the phosphorylation of pantothenate (Pan), the first step in CoA biosynthesis. The protein is Type III pantothenate kinase of Ruegeria sp. (strain TM1040) (Silicibacter sp.).